A 360-amino-acid polypeptide reads, in one-letter code: DNA integrity scanning protein DisA (360 aa).

Residues 11-149 (ELDLSSILQF…ENMKYTLKDI (139 aa)) form the DAC domain. Residues Gly-78, Leu-96, and 109 to 113 (MRHRT) contribute to the ATP site.

Belongs to the DisA family. In terms of assembly, homooligomer. Interacts with RadA. It depends on Mg(2+) as a cofactor.

It localises to the cytoplasm. The enzyme catalyses 2 ATP = 3',3'-c-di-AMP + 2 diphosphate. Diadenylate cyclase (DAC) activity is inhibited 2-fold by Holliday junction (HJ) DNA, further addition of RecG inhibits DAC activity 11-fold; RecG may relocate DisA from the HJ. DAC is inhibited by the interaction with RadA. Diadenylate cyclase activity is not affected by ssDNA or dsDNA, but three- and four-way junctions strongly inhibit the activity of DisA, suggesting the enzyme is regulated by branched nucleic acids. Functionally, participates in a DNA-damage check-point that is active prior to asymmetric division when DNA is damaged. Forms globular foci that rapidly scan along the chromosomes during sporulation, searching for lesions. Its ability to scan through the chromosome rapidly is due to its non-specific DNA-binding. When a lesion is present, DisA pauses at the lesion site. This triggers a cellular response that culminates in a temporary block in sporulation initiation. It is required, at least partially, to inhibit the activity of the transcription factor spo0A, which controls, among others, early sporulation genes. In B.subtilis c-di-AMP is a second messenger that mediates growth, DNA repair and cell wall homeostasis; it is toxic when present in excess. Limits the replication fork reggression activity of RecG; DisA inhibits the ATPase activity of RecG. By limiting RecG-mediated fork regression, DisA provides time for removal of potentially lethal DNA lesions. One of 3 paralogous diadenylate cyclases (DAC) in this bacteria. Has diadenylate cyclase activity, catalyzing the condensation of 2 ATP molecules into cyclic di-AMP (c-di-AMP). c-di-AMP acts as a signaling molecule that couples DNA integrity with progression of sporulation. The rise in c-di-AMP level generated by DisA while scanning the chromosome operates as a positive signal that advances sporulation; upon encountering a lesion, the DisA focus arrests at the damaged site and halts c-di-AMP synthesis. Does not convert GTP to c-di-GMP. This is DNA integrity scanning protein DisA from Bacillus subtilis (strain 168).